A 38-amino-acid polypeptide reads, in one-letter code: Cytochrome b6-f complex subunit 5 (38 aa).

Residues 5 to 25 traverse the membrane as a helical segment; the sequence is LVLGLVMGLVPITLAGLFVAA.

Belongs to the PetG family. The 4 large subunits of the cytochrome b6-f complex are cytochrome b6, subunit IV (17 kDa polypeptide, PetD), cytochrome f and the Rieske protein, while the 4 small subunits are PetG, PetL, PetM and PetN. The complex functions as a dimer.

Its subcellular location is the cellular thylakoid membrane. Its function is as follows. Component of the cytochrome b6-f complex, which mediates electron transfer between photosystem II (PSII) and photosystem I (PSI), cyclic electron flow around PSI, and state transitions. PetG is required for either the stability or assembly of the cytochrome b6-f complex. This is Cytochrome b6-f complex subunit 5 from Gloeothece citriformis (strain PCC 7424) (Cyanothece sp. (strain PCC 7424)).